The chain runs to 345 residues: Growth hormone-inducible transmembrane protein (345 aa).

The transit peptide at 1–45 (MLAARLVCLRTLPSRVFHPAFTKASPVVKNSITKNQWLLTPSREY) directs the protein to the mitochondrion. The Mitochondrial matrix portion of the chain corresponds to 46–82 (ATKTRIGIRRGRTGQELKEAALEPSMEKIFKIDQMGR). A helical transmembrane segment spans residues 83–103 (WFVAGGAAVGLGALCYYGLGL). Residues 104–125 (SNEIGAIEKAVIWPQYVKDRIH) lie on the Mitochondrial intermembrane side of the membrane. The chain crosses the membrane as a helical span at residues 126-146 (STYMYLAGSIGLTALSAIAIS). Topologically, residues 147–159 (RTPVLMNFMMRGS) are mitochondrial matrix. The chain crosses the membrane as a helical span at residues 160–180 (WVTIGVTFAAMVGAGMLVRSI). Residues 181-190 (PYDQSPGPKH) are Mitochondrial intermembrane-facing. Residues 191–211 (LAWLLHSGVMGAVVAPLTILG) form a helical membrane-spanning segment. Topologically, residues 212–213 (GP) are mitochondrial matrix. Residues 214-234 (LLIRAAWYTAGIVGGLSTVAM) form a helical membrane-spanning segment. Residues 235-244 (CAPSEKFLNM) are Mitochondrial intermembrane-facing. A helical transmembrane segment spans residues 245 to 265 (GAPLGVGLGLVFVSSLGSMFL). Over 266 to 271 (PPTTVA) the chain is Mitochondrial matrix. Residues 272 to 292 (GATLYSVAMYGGLVLFSMFLL) form a helical membrane-spanning segment. Residues 293–345 (YDTQKVIKRAEVSPMYGVQKYDPINSMLSIYMDTLNIFMRVATMLATGGNRKK) lie on the Mitochondrial intermembrane side of the membrane.

The protein belongs to the BI1 family. In terms of assembly, interacts with LETM1. Interacts with AFG3L2. In terms of processing, undergoes AFG3L2-mediated proteolytic degradation, upon hyperpolarization of mitochondria.

The protein resides in the mitochondrion inner membrane. It catalyses the reaction Ca(2+)(in) + 2 H(+)(out) = Ca(2+)(out) + 2 H(+)(in). The enzyme catalyses K(+)(in) + H(+)(out) = K(+)(out) + H(+)(in). In terms of biological role, plays an important role in maintenance of mitochondrial morphology and in mediating either calcium or potassium/proton antiport. Mediates proton-dependent calcium efflux from mitochondrion. Also functions as an electroneutral mitochondrial proton/potassium exchanger. Required for the mitochondrial tubular network and cristae organization. Involved in apoptotic release of cytochrome c. Inhibits the proteolytic activity of AFG3L2, stimulating respiration and stabilizing respiratory enzymes in actively respiring mitochondria. However, when mitochondria become hyperpolarized, GHITM loses its inhibitory activity toward AFG3L2 and the now the active AFG3L2 turns first on GHITM and, if hyperpolarization persists, on other proteins of the mitochondria, leading to a broad remodeling of the mitochondrial proteome. This is Growth hormone-inducible transmembrane protein (GHITM) from Homo sapiens (Human).